Here is an 813-residue protein sequence, read N- to C-terminus: MKMASQRFCLRWNNHQSNLLSVFDQLLHAETFTDVTLAVEGQHLKAHKMVLSACSPYFNTLFVSHPEKHPIVILKDVPYSDMKSLLDFMYRGEVSVDQERLTAFLRVAESLRIKGLTEVNDDKPSPAAAAAGAGATGSESTATTPQLQRIQPYLVPQRNRSQAGGLLASAANAGNTPTLPVQPSLLSSALMPKRKRGRPRKLSGSSNGTGNDYDDFDRENMMNDSSDLGNGKMCNESYSGNDDGSDDNQPNAGHTDDLNESRDSLPSKRSKNSKDHRVVSHHEDNSTSVTPTKATPELSQRLFGSSSTTISATAPGGSSTGPSETISLLEISDERESAPVHLPTILGLKIRAINTTTPAQQGSPQTPTKSKPKIRQATGSNNSNSLLKQQLRGGAKDPEVPPATRITGAVTPNAALNAEEQSKEMPKKNQDEVNACIGLHSLANAAEQQAAQVASTGNLHHQLLLHMAANNSMLNTTDYYQQQQQESPSSAGQFMDDDLELLSLNDQQDKSDEPDHEMVTLADENAGLPGYQGNEAEATPAQEDSPAAETATAPPPAPRSGKKGAKRPIQRRRVRRKAQSTLDDQAEHLTEMSVRGLDLFRYASVVEGVYRCTECAKENMQKTFKNKYSFQRHAFLYHEGKHRKVFPCPVCSKEFSRPDKMKNHLKMTHENFTPPKDIGAFSPLKYLISAAAAGDMHATIYQQQQDHYHRQLAEQLEQQNASFDSRDSSLILPDVKMEHAEDQDAEQEAELSDGGYDASNPAAAAAAMLSLQQDVIIKDEIQISPSPSPTPPASCAVAEGKSLALASTAQTAT.

The BTB domain maps to 33–98 (TDVTLAVEGQ…MYRGEVSVDQ (66 aa)). 4 disordered regions span residues 118–148 (EVNDDKPSPAAAAAGAGATGSESTATTPQLQ), 171–324 (ANAG…GPSE), 356–428 (TTPA…MPKK), and 526–585 (AGLP…LDDQ). Positions 125–145 (SPAAAAAGAGATGSESTATTP) are enriched in low complexity. The span at 176-187 (TPTLPVQPSLLS) shows a compositional bias: polar residues. Basic residues predominate over residues 192 to 201 (PKRKRGRPRK). 3 positions are modified to phosphoserine: S203, S205, and S206. T209 carries the phosphothreonine modification. The segment covering 254–285 (HTDDLNESRDSLPSKRSKNSKDHRVVSHHEDN) has biased composition (basic and acidic residues). Polar residues-rich tracts occupy residues 302-324 (LFGSSSTTISATAPGGSSTGPSE), 356-369 (TTPAQQGSPQTPTK), and 377-388 (ATGSNNSNSLLK). Residues 560-578 (SGKKGAKRPIQRRRVRRKA) are compositionally biased toward basic residues. 2 consecutive C2H2-type zinc fingers follow at residues 610–638 (YRCTECAKENMQKTFKNKYSFQRHAFLYH) and 646–669 (FPCPVCSKEFSRPDKMKNHLKMTH). A Phosphoserine modification is found at S682.

Interacts with CoRest/CG33525, suggesting that it acts by recruiting a CoRest-containing corepressor complex. Interacts with phyl.

The protein resides in the nucleus. Functionally, binds to a number of sites in the transcriptional regulatory region of ftz. Isoform alpha is required to repress genes that promote the R7 cell fate. Probable repressor of the transcription of the segmentation genes ftz, eve, h, odd, run, and en. May bind to the region 5'-AGGG[CT]GG-3'. Degradation of ttk is directed by binding of sinah or sina, via the adapter molecule phyl which binds to the BTB domain of ttk. The chain is Protein tramtrack, alpha isoform (ttk) from Drosophila melanogaster (Fruit fly).